The following is a 549-amino-acid chain: Urocanate hydratase (549 aa).

Residues 46-47 (GG), Gln-124, Glu-190, Arg-195, 236-237 (NA), 257-261 (QTSAH), 267-268 (YV), and Tyr-316 contribute to the NAD(+) site. The active site involves Cys-404. Gly-486 contributes to the NAD(+) binding site.

The protein belongs to the urocanase family. It depends on NAD(+) as a cofactor.

The protein resides in the cytoplasm. It catalyses the reaction 4-imidazolone-5-propanoate = trans-urocanate + H2O. The protein operates within amino-acid degradation; L-histidine degradation into L-glutamate; N-formimidoyl-L-glutamate from L-histidine: step 2/3. Catalyzes the conversion of urocanate to 4-imidazolone-5-propionate. In Thermoanaerobacter pseudethanolicus (strain ATCC 33223 / 39E) (Clostridium thermohydrosulfuricum), this protein is Urocanate hydratase.